The primary structure comprises 181 residues: uncharacterized protein (181 aa).

Belongs to the M.jannaschii MJ0150/MJ0739/MJ0745/MJ1460/MJ1642 family.

This is an uncharacterized protein from Methanocaldococcus jannaschii (strain ATCC 43067 / DSM 2661 / JAL-1 / JCM 10045 / NBRC 100440) (Methanococcus jannaschii).